A 321-amino-acid chain; its full sequence is tRNA(Ile)-lysidine synthase (321 aa).

30-35 (SGGSDS) is a binding site for ATP.

The protein belongs to the tRNA(Ile)-lysidine synthase family.

The protein resides in the cytoplasm. The catalysed reaction is cytidine(34) in tRNA(Ile2) + L-lysine + ATP = lysidine(34) in tRNA(Ile2) + AMP + diphosphate + H(+). Ligates lysine onto the cytidine present at position 34 of the AUA codon-specific tRNA(Ile) that contains the anticodon CAU, in an ATP-dependent manner. Cytidine is converted to lysidine, thus changing the amino acid specificity of the tRNA from methionine to isoleucine. The sequence is that of tRNA(Ile)-lysidine synthase from Chlamydia trachomatis serovar A (strain ATCC VR-571B / DSM 19440 / HAR-13).